The chain runs to 152 residues: Transcriptional repressor NrdR (152 aa).

Residues 3–34 (CPFCNHGELKVIDSRNSPEANAIKRRRECLRC) fold into a zinc finger. The ATP-cone domain maps to 48 to 138 (IQVLKRDGRY…VYRRFRDVGE (91 aa)).

This sequence belongs to the NrdR family. Requires Zn(2+) as cofactor.

In terms of biological role, negatively regulates transcription of bacterial ribonucleotide reductase nrd genes and operons by binding to NrdR-boxes. In Chlamydia muridarum (strain MoPn / Nigg), this protein is Transcriptional repressor NrdR.